A 210-amino-acid polypeptide reads, in one-letter code: Glycerol-3-phosphate acyltransferase (210 aa).

Transmembrane regions (helical) follow at residues L8–T28, G56–A76, T87–F107, T119–A139, I144–S164, and G165–A185.

It belongs to the PlsY family. As to quaternary structure, probably interacts with PlsX.

It localises to the cell inner membrane. It carries out the reaction an acyl phosphate + sn-glycerol 3-phosphate = a 1-acyl-sn-glycero-3-phosphate + phosphate. It participates in lipid metabolism; phospholipid metabolism. Catalyzes the transfer of an acyl group from acyl-phosphate (acyl-PO(4)) to glycerol-3-phosphate (G3P) to form lysophosphatidic acid (LPA). This enzyme utilizes acyl-phosphate as fatty acyl donor, but not acyl-CoA or acyl-ACP. In Gluconobacter oxydans (strain 621H) (Gluconobacter suboxydans), this protein is Glycerol-3-phosphate acyltransferase.